The chain runs to 433 residues: MGQNFSKKSSNDLVSRIIFTIFMLIICRIGSFIPIPGIDSIALNSVAEKNQFGILGMFNMLSGGSLGRMSIFALAIMPYITASIIIQLMSVAYKPLENLKKEGESGKRKINQLSRYLTVLLASFQAYGVALSLESMVTNTGPVVILAGFFFRVTTVITLVVGTMLLMWLGEQITQRGIGNGTSLIIFIGIISGVPSAIISMFELSRKGALSPLIAITVCIGVVLLIAIIIFFEKAQRKLLVQYPKRQVGNKIYGGEATHMPLKLNTSGVIPPIFASSILLFPTTLANFSNSNSETMSMLSYYLGHGKPVYILLYVVLIMFFSFFYTAIVFNSEETANNLRKYGAYIPGKRPGKNTSDYFDYILTRLTVIGGLYLSIICVIPELLMNKYVISLSLGGTSFLIVVNVVLDTMTQIQTYLFSSKYEGLMKKIKLKN.

The next 10 helical transmembrane spans lie at 17 to 37 (IIFT…PIPG), 71 to 91 (IFAL…LMSV), 117 to 137 (LTVL…ESMV), 141 to 161 (GPVV…TLVV), 184 to 204 (LIIF…MFEL), 212 to 232 (PLIA…IIFF), 268 to 288 (GVIP…LANF), 310 to 330 (YILL…AIVF), 366 to 386 (LTVI…LLMN), and 388 to 408 (YVIS…VVLD).

The protein belongs to the SecY/SEC61-alpha family. Component of the Sec protein translocase complex. Heterotrimer consisting of SecY, SecE and SecG subunits. The heterotrimers can form oligomers, although 1 heterotrimer is thought to be able to translocate proteins. Interacts with the ribosome. Interacts with SecDF, and other proteins may be involved. Interacts with SecA.

Its subcellular location is the cell inner membrane. Its function is as follows. The central subunit of the protein translocation channel SecYEG. Consists of two halves formed by TMs 1-5 and 6-10. These two domains form a lateral gate at the front which open onto the bilayer between TMs 2 and 7, and are clamped together by SecE at the back. The channel is closed by both a pore ring composed of hydrophobic SecY resides and a short helix (helix 2A) on the extracellular side of the membrane which forms a plug. The plug probably moves laterally to allow the channel to open. The ring and the pore may move independently. In Rickettsia typhi (strain ATCC VR-144 / Wilmington), this protein is Protein translocase subunit SecY.